Reading from the N-terminus, the 354-residue chain is MAELKNDRYLRALLKQPVDATPVWMMRQAGRYLPEYKATRAQAGDFMSLCRNAELACEVTLQPLRRYKLDAAILFSDILTVPDAMGLGLYFEEGEGPRFERPTDTVDAIKKLCIPDPEDELGYVMRAVSTIRRELKGEVPLIGFSGSPWTLATYMVEGGSSKTFEKIKKMAYAEPAALHMLLDKLADSVILYLNAQVANGAQSLMIFDSWGGALSHHAYREFSLRYMQKIVDGLTRFADGRQVPVTLFTKGGGLWLESMAETGCDALGLDWTVDIGDARRRVGDKVALQGNMDPSMLYASPERIHQEVGQILSSYGKGTGHVFNLGHGIHQHVDPEHAGAFINSVHELSPQYHK.

Residues Arg27–Arg31, Asp77, Tyr154, Ser209, and His327 each bind substrate.

The protein belongs to the uroporphyrinogen decarboxylase family. In terms of assembly, homodimer.

Its subcellular location is the cytoplasm. The enzyme catalyses uroporphyrinogen III + 4 H(+) = coproporphyrinogen III + 4 CO2. It functions in the pathway porphyrin-containing compound metabolism; protoporphyrin-IX biosynthesis; coproporphyrinogen-III from 5-aminolevulinate: step 4/4. Catalyzes the decarboxylation of four acetate groups of uroporphyrinogen-III to yield coproporphyrinogen-III. The sequence is that of Uroporphyrinogen decarboxylase from Shewanella denitrificans (strain OS217 / ATCC BAA-1090 / DSM 15013).